Consider the following 319-residue polypeptide: Alpha-hemolysin (319 aa).

An N-terminal signal peptide occupies residues 1-26; sequence MKTRIVSSVTTTLLLGSILMNPVANA.

Belongs to the aerolysin family. As to quaternary structure, self-assembles to form first a non-lytic oligomeric intermediate and then, a mushroom-shaped homoheptamer structure of 100 Angstroms in length and up to 100 Angstroms in diameter.

It localises to the secreted. Alpha-toxin binds to the membrane of eukaryotic cells resulting in the release of low-molecular weight molecules and leading to an eventual osmotic lysis. Inhibits host neutrophil chemotaxis to the lesion region. Heptamer oligomerization and pore formation is required for lytic activity. In Staphylococcus aureus (strain NCTC 8325 / PS 47), this protein is Alpha-hemolysin (hly).